We begin with the raw amino-acid sequence, 232 residues long: tRNA (guanine-N(7)-)-methyltransferase (232 aa).

4 residues coordinate S-adenosyl-L-methionine: Glu-63, Glu-88, Asp-115, and Asp-137. Residue Asp-137 is part of the active site. Residues Lys-141, Asp-173, and 211–214 each bind substrate; that span reads TRYE.

It belongs to the class I-like SAM-binding methyltransferase superfamily. TrmB family.

The enzyme catalyses guanosine(46) in tRNA + S-adenosyl-L-methionine = N(7)-methylguanosine(46) in tRNA + S-adenosyl-L-homocysteine. Its pathway is tRNA modification; N(7)-methylguanine-tRNA biosynthesis. Its function is as follows. Catalyzes the formation of N(7)-methylguanine at position 46 (m7G46) in tRNA. The polypeptide is tRNA (guanine-N(7)-)-methyltransferase (Agrobacterium fabrum (strain C58 / ATCC 33970) (Agrobacterium tumefaciens (strain C58))).